Consider the following 346-residue polypeptide: Protein RecA (346 aa).

65-72 (GPESSGKT) is an ATP binding site.

This sequence belongs to the RecA family.

It localises to the cytoplasm. Can catalyze the hydrolysis of ATP in the presence of single-stranded DNA, the ATP-dependent uptake of single-stranded DNA by duplex DNA, and the ATP-dependent hybridization of homologous single-stranded DNAs. It interacts with LexA causing its activation and leading to its autocatalytic cleavage. The protein is Protein RecA of Enterococcus hirae (strain ATCC 9790 / DSM 20160 / JCM 8729 / LMG 6399 / NBRC 3181 / NCIMB 6459 / NCDO 1258 / NCTC 12367 / WDCM 00089 / R).